A 360-amino-acid polypeptide reads, in one-letter code: Cytoplasmic envelopment protein 2 (360 aa).

It belongs to the herpesviridae cytoplasmic envelopment protein 2 family. As to quaternary structure, interacts with cytoplasmic envelopment protein 3 and with the capsid.

The protein resides in the virion tegument. The protein localises to the host cytoplasm. It is found in the host nucleus. Functionally, plays a critical role in cytoplasmic virus egress. Participates in the final step of tegumentation and envelope acquisition within the host cytoplasm by directly interacting with the capsid. Upon virion binding to target cell, a signaling cascade is triggered to disrupt the interaction with the capsid, thereby preparing capsid uncoating. This is Cytoplasmic envelopment protein 2 (MDV028) from Gallus gallus (Chicken).